Here is a 38-residue protein sequence, read N- to C-terminus: Photosystem II reaction center protein X 1 (38 aa).

The chain crosses the membrane as a helical span at residues 8–28 (FLWSLLYGAVVLGLLFGAIVF).

Belongs to the PsbX family. Type 1 subfamily. In terms of assembly, PSII is composed of 1 copy each of membrane proteins PsbA, PsbB, PsbC, PsbD, PsbE, PsbF, PsbH, PsbI, PsbJ, PsbK, PsbL, PsbM, PsbT, PsbX, PsbY, PsbZ, Psb30/Ycf12, peripheral proteins PsbO, CyanoQ (PsbQ), PsbU, PsbV and a large number of cofactors. It forms dimeric complexes.

The protein resides in the cellular thylakoid membrane. In terms of biological role, involved in the binding and/or turnover of quinones at the Q(B) site of photosystem II (PSII). PSII is a light-driven water plastoquinone oxidoreductase, using light energy to abstract electrons from H(2)O, generating a proton gradient subsequently used for ATP formation. This is Photosystem II reaction center protein X 1 from Synechococcus sp. (strain JA-3-3Ab) (Cyanobacteria bacterium Yellowstone A-Prime).